A 473-amino-acid polypeptide reads, in one-letter code: Phosphatidylserine synthase 2 (473 aa).

The segment at 1–25 (MRRGERRVAGGSGSESPLLKGRRST) is disordered. The Cytoplasmic portion of the chain corresponds to 1–40 (MRRGERRVAGGSGSESPLLKGRRSTESEVYDDGTNTFFWR). Phosphoserine occurs at positions 12, 14, and 16. The helical transmembrane segment at 41 to 61 (AHTLTVLFILTCALGYVTLLE) threads the bilayer. Topologically, residues 62–74 (ETPQDTAYNTKRG) are lumenal. The helical transmembrane segment at 75–95 (IVASILVFLCFGVTQAKDGPF) threads the bilayer. Residues 96–104 (SRPHPAYWR) lie on the Cytoplasmic side of the membrane. Residues 105 to 125 (FWLCVSVVYELFLIFILFQTV) form a helical membrane-spanning segment. Topologically, residues 126 to 291 (QDGRQFLKYV…EWKPASSLHR (166 aa)) are lumenal. Asparagine 159 carries an N-linked (GlcNAc...) asparagine glycan. The helical transmembrane segment at 292–312 (WLAVCGIILVFLLAELNTFYL) threads the bilayer. A topological domain (cytoplasmic) is located at residue lysine 313. The chain crosses the membrane as a helical span at residues 314-334 (FVLWMPPEHYLVLLRLVFFVN). At 335-354 (VGGVAMREIYDFMDELKPHR) the chain is on the lumenal side. Residues 355 to 375 (KLGQQAWLVAAITVTELLIVV) traverse the membrane as a helical segment. The Cytoplasmic segment spans residues 376–381 (KYDPHT). A helical membrane pass occupies residues 382-402 (LTLSLPFYISQCWTLGSILVL). The Lumenal portion of the chain corresponds to 403 to 473 (TWTVWRFFLR…TAEEGTSAAS (71 aa)). The segment at 422 to 473 (RRQKQQSHQARAVNNRDGHPGPDDDLLGTGTAEEEGTTNDGVTAEEGTSAAS) is disordered.

This sequence belongs to the phosphatidyl serine synthase family. Highly expressed in testis. Detected at lower levels in kidney and heart.

The protein localises to the endoplasmic reticulum membrane. The protein resides in the membrane. It carries out the reaction a 1,2-diacyl-sn-glycero-3-phosphoethanolamine + L-serine = a 1,2-diacyl-sn-glycero-3-phospho-L-serine + ethanolamine. The enzyme catalyses 1-hexadecanoyl-2-(9Z-octadecenoyl)-sn-glycero-3-phosphoethanolamine + L-serine = 1-hexadecanoyl-2-(9Z-octadecenoyl)-sn-glycero-3-phospho-L-serine + ethanolamine. It catalyses the reaction 1-hexadecanoyl-2-(4Z,7Z,10Z,13Z,16Z,19Z-docosahexaenoyl)-sn-glycero-3-phosphoethanolamine + L-serine = 1-hexadecanoyl-2-(4Z,7Z,10Z,13Z,16Z,19Z-docosahexaenoyl)-sn-glycero-3-phosphoserine + ethanolamine. The catalysed reaction is 1-octadecanoyl-2-(5Z,8Z,11Z,14Z)-eicosatetraenoyl-sn-glycero-3-phosphoethanolamine + L-serine = 1-octadecanoyl-2-(5Z,8Z,11Z,14Z)-eicosatetraenoyl-sn-glycero-3-phosphoserine + ethanolamine. It carries out the reaction 1-octadecanoyl-2-(4Z,7Z,10Z,13Z,16Z,19Z-docosahexaenoyl)-sn-glycero-3-phosphoethanolamine + L-serine = 1-octadecanoyl-2-(4Z,7Z,10Z,13Z,16Z,19Z-docosahexaenoyl)-sn-glycero-3-phosphoserine + ethanolamine. The enzyme catalyses 1-(1Z-octadecenyl)-2-(4Z,7Z,10Z,13Z,16Z,19Z-docosahexaenoyl)-sn-glycero-3-phosphoethanolamine + L-serine = 1-(1Z-octadecenyl)-2-(4Z,7Z,10Z,13Z,16Z,19Z-docosahexaenoyl)-sn-glycero-3-phospho-L-serine + ethanolamine. It catalyses the reaction 1-octadecanoyl-2-(9Z-octadecenoyl)-sn-glycero-3-phosphoethanolamine + L-serine = 1-octadecanoyl-2-(9Z-octadecenoyl)-sn-glycero-3-phospho-L-serine + ethanolamine. The catalysed reaction is 1-(1Z-octadecenyl)-2-(9Z-octadecenoyl)-sn-glycero-3-phosphoethanolamine + L-serine = 1-(1Z-octadecenyl)-2-(9Z-octadecenoyl)-sn-glycero-3-phospho-L-serine + ethanolamine. It carries out the reaction 1-(1Z-octadecenyl)-2-(5Z,8Z,11Z,14Z- eicosatetraenoyl)-sn-glycero-3-phosphoethanolamine + L-serine = 1-(1Z-octadecenyl)-2-(5Z,8Z,11Z,14Z-eicosatetraenoyl)-sn-glycero-3-phospho-L-serine + ethanolamine. Its pathway is phospholipid metabolism; phosphatidylserine biosynthesis. Its activity is regulated as follows. Almost complete inhibition by ethanolamine in both the mitochondria-associated membrane (MAM) and endoplasmic reticulum (ER) per se. Functionally, catalyzes a base-exchange reaction in which the polar head group of phosphatidylethanolamine (PE) or phosphatidylcholine (PC) is replaced by L-serine. Catalyzes the conversion of phosphatatidylethanolamine and does not act on phosphatidylcholine. Can utilize both phosphatidylethanolamine (PE) plasmalogen and diacyl PE as substrate and the latter is six times better utilized, indicating the importance of an ester linkage at the sn-1 position. Although it shows no sn-1 fatty acyl preference, exhibits significant preference towards docosahexaenoic acid (22:6n-3) compared with 18:1 or 20:4 at the sn-2 position. This is Phosphatidylserine synthase 2 (Ptdss2) from Mus musculus (Mouse).